We begin with the raw amino-acid sequence, 57 residues long: Small ribosomal subunit protein eS27 (57 aa).

Zn(2+) contacts are provided by Cys10, Cys13, Cys29, and Cys32. The C4-type zinc-finger motif lies at 10–32 (CDDCENEQVLFGKAANTVNCAVC).

It belongs to the eukaryotic ribosomal protein eS27 family. In terms of assembly, part of the 30S ribosomal subunit. Requires Zn(2+) as cofactor.

The protein is Small ribosomal subunit protein eS27 of Natronomonas pharaonis (strain ATCC 35678 / DSM 2160 / CIP 103997 / JCM 8858 / NBRC 14720 / NCIMB 2260 / Gabara) (Halobacterium pharaonis).